Here is a 459-residue protein sequence, read N- to C-terminus: Transmembrane protein 143 (459 aa).

2 helical membrane passes run 280 to 300 and 301 to 321; these read LLNL…GMVV and LTDL…FMGL. At Ser-332 the chain carries Phosphoserine. The disordered stretch occupies residues 435 to 459; the sequence is GFPKLDPVAPITSEPPQATPSSNIS. Over residues 448–459 the composition is skewed to polar residues; that stretch reads EPPQATPSSNIS.

It localises to the membrane. This chain is Transmembrane protein 143 (TMEM143), found in Homo sapiens (Human).